A 209-amino-acid chain; its full sequence is Protein-L-isoaspartate O-methyltransferase (209 aa).

Serine 59 is an active-site residue.

It belongs to the methyltransferase superfamily. L-isoaspartyl/D-aspartyl protein methyltransferase family. In terms of assembly, monomer.

It is found in the cytoplasm. The catalysed reaction is [protein]-L-isoaspartate + S-adenosyl-L-methionine = [protein]-L-isoaspartate alpha-methyl ester + S-adenosyl-L-homocysteine. Functionally, catalyzes the methyl esterification of L-isoaspartyl residues in peptides and proteins that result from spontaneous decomposition of normal L-aspartyl and L-asparaginyl residues. It plays a role in the repair and/or degradation of damaged proteins. The polypeptide is Protein-L-isoaspartate O-methyltransferase (pcm) (Helicobacter pylori (strain J99 / ATCC 700824) (Campylobacter pylori J99)).